Reading from the N-terminus, the 297-residue chain is Homoserine kinase (297 aa).

82–92 contributes to the ATP binding site; it reads PVSRGLGSSAA.

It belongs to the GHMP kinase family. Homoserine kinase subfamily.

Its subcellular location is the cytoplasm. The catalysed reaction is L-homoserine + ATP = O-phospho-L-homoserine + ADP + H(+). Its pathway is amino-acid biosynthesis; L-threonine biosynthesis; L-threonine from L-aspartate: step 4/5. Functionally, catalyzes the ATP-dependent phosphorylation of L-homoserine to L-homoserine phosphate. This Clostridium botulinum (strain Kyoto / Type A2) protein is Homoserine kinase.